Reading from the N-terminus, the 273-residue chain is XIAP-associated factor 1 (273 aa).

The segment at 22–80 adopts a TRAF-type zinc-finger fold; the sequence is LHEAHCLRFIVLCPECEEPIPESKMKEHMEVVHQQTKESQQHPAKCKFCELAVQLSNLD. The interval 181 to 228 is disordered; sequence GNRRSTVSKDVRPKTKNRNSSTKRETKKQNGTVALPLKSGLQQRADLP.

As to quaternary structure, interacts with BIRC1, BIRC2, BIRC3, BIRC4, BIRC7 and BIRC8. Part of an complex consisting of BIRC4, XAF1 and BIRC5; the complex formation requires IFN-beta stimulation. Interacts with RNF114, the interaction increases XAF1 stability and proapoptotic effects, and may regulate IFN signaling.

The protein resides in the cytoplasm. The protein localises to the nucleus. It is found in the mitochondrion. Seems to function as a negative regulator of members of the IAP (inhibitor of apoptosis protein) family. Inhibits anti-caspase activity of BIRC4. Induces cleavage and inactivation of BIRC4 independent of caspase activation. Mediates TNF-alpha-induced apoptosis and is involved in apoptosis in trophoblast cells. May inhibit BIRC4 indirectly by activating the mitochondrial apoptosis pathway. After translocation to mitochondria, promotes translocation of BAX to mitochondria and cytochrome c release from mitochondria. Seems to promote the redistribution of BIRC4 from the cytoplasm to the nucleus, probably independent of BIRC4 inactivation which seems to occur in the cytoplasm. The BIRC4-XAF1 complex mediates down-regulation of BIRC5/survivin; the process requires the E3 ligase activity of BIRC4. Seems to be involved in cellular sensitivity to the proapoptotic actions of TRAIL. May be a tumor suppressor by mediating apoptosis resistance of cancer cells. This Mus musculus (Mouse) protein is XIAP-associated factor 1 (Xaf1).